Here is a 61-residue protein sequence, read N- to C-terminus: Large ribosomal subunit protein eL37 (61 aa).

Residues cysteine 19, cysteine 22, cysteine 34, and cysteine 37 each coordinate Zn(2+). The segment at 19–37 (CRRCGRNSFNVRKGYCAAC) adopts a C4-type zinc-finger fold.

It belongs to the eukaryotic ribosomal protein eL37 family. Zn(2+) serves as cofactor.

Functionally, binds to the 23S rRNA. This is Large ribosomal subunit protein eL37 (rpl37e) from Sulfurisphaera tokodaii (strain DSM 16993 / JCM 10545 / NBRC 100140 / 7) (Sulfolobus tokodaii).